We begin with the raw amino-acid sequence, 147 residues long: Sulfur acceptor protein CsdE (147 aa).

C61 acts as the Cysteine persulfide intermediate in catalysis. C61 carries the post-translational modification Cysteine persulfide.

This sequence belongs to the SufE family. Homodimer. Forms a heterodimer with CsdA. Interacts with CsdA and with TcdA/CsdL.

Functionally, stimulates the cysteine desulfurase activity of CsdA. Contains a cysteine residue (Cys-61) that acts to accept sulfur liberated via the desulfurase activity of CsdA. May be able to transfer sulfur to TcdA/CsdL. Seems to support the function of TcdA in the generation of cyclic threonylcarbamoyladenosine at position 37 (ct(6)A37) in tRNAs that read codons beginning with adenine. Does not appear to participate in Fe/S biogenesis. The chain is Sulfur acceptor protein CsdE (csdE) from Escherichia coli (strain K12).